The primary structure comprises 203 residues: Transcriptional regulator GfcR (203 aa).

It belongs to the purine/pyrimidine phosphoribosyltransferase family. GfcR subfamily.

The protein is Transcriptional regulator GfcR of Methanococcoides burtonii (strain DSM 6242 / NBRC 107633 / OCM 468 / ACE-M).